The chain runs to 305 residues: Peroxisome assembly protein 26 (305 aa).

The interval 1–25 is disordered; it reads MKSDCSTSAAPFRGLGGPLRSSEPV. Residues 1-246 lie on the Cytoplasmic side of the membrane; the sequence is MKSDCSTSAA…RQLWDSAVSH (246 aa). The chain crosses the membrane as a helical; Signal-anchor for type II membrane protein span at residues 247 to 267; that stretch reads FFSLPFKKSLLAALILCLLVV. Topologically, residues 268–305 are peroxisomal matrix; sequence RFDPASPSSLPSLYKLAQLFRWIRKAASSRLYQLRIRD.

The protein belongs to the peroxin-26 family. Interacts (via its cytoplasmic domain) with PEX6; interaction is direct and is ATP-dependent. Interacts with PEX1; interaction is indirect and is mediated via interaction with PEX6.

It localises to the peroxisome membrane. Functionally, peroxisomal docking factor that anchors PEX1 and PEX6 to peroxisome membranes. PEX26 is therefore required for the formation of the PEX1-PEX6 AAA ATPase complex, a complex that mediates the extraction of the PEX5 receptor from peroxisomal membrane. The chain is Peroxisome assembly protein 26 (PEX26) from Macaca fascicularis (Crab-eating macaque).